A 407-amino-acid polypeptide reads, in one-letter code: Phosphopentomutase (407 aa).

Asp11, Asp305, His310, Asp346, His347, and His358 together coordinate Mn(2+).

It belongs to the phosphopentomutase family. Mn(2+) serves as cofactor.

The protein resides in the cytoplasm. It catalyses the reaction 2-deoxy-alpha-D-ribose 1-phosphate = 2-deoxy-D-ribose 5-phosphate. The enzyme catalyses alpha-D-ribose 1-phosphate = D-ribose 5-phosphate. The protein operates within carbohydrate degradation; 2-deoxy-D-ribose 1-phosphate degradation; D-glyceraldehyde 3-phosphate and acetaldehyde from 2-deoxy-alpha-D-ribose 1-phosphate: step 1/2. Functionally, isomerase that catalyzes the conversion of deoxy-ribose 1-phosphate (dRib-1-P) and ribose 1-phosphate (Rib-1-P) to deoxy-ribose 5-phosphate (dRib-5-P) and ribose 5-phosphate (Rib-5-P), respectively. The sequence is that of Phosphopentomutase from Legionella pneumophila subsp. pneumophila (strain Philadelphia 1 / ATCC 33152 / DSM 7513).